We begin with the raw amino-acid sequence, 164 residues long: C-phycoerythrin alpha chain (164 aa).

Residues Cys82 and Cys139 each contribute to the (2R,3E)-phycoerythrobilin site.

This sequence belongs to the phycobiliprotein family. In terms of assembly, heterodimer of an alpha and a beta chain. Contains two covalently linked bilin chromophores.

The protein localises to the cellular thylakoid membrane. Its function is as follows. Light-harvesting photosynthetic bile pigment-protein from the phycobiliprotein complex. The sequence is that of C-phycoerythrin alpha chain (cpeA) from Pseudanabaena tenuis (strain PCC 7409).